The primary structure comprises 288 residues: Homoserine kinase (288 aa).

79–89 contributes to the ATP binding site; sequence PPARGLGSSSA.

This sequence belongs to the GHMP kinase family. Homoserine kinase subfamily.

Its subcellular location is the cytoplasm. The catalysed reaction is L-homoserine + ATP = O-phospho-L-homoserine + ADP + H(+). It participates in amino-acid biosynthesis; L-threonine biosynthesis; L-threonine from L-aspartate: step 4/5. Functionally, catalyzes the ATP-dependent phosphorylation of L-homoserine to L-homoserine phosphate. The protein is Homoserine kinase of Listeria monocytogenes serotype 4b (strain CLIP80459).